The following is a 411-amino-acid chain: Adenylosuccinate synthetase (411 aa).

Residues G11–K17 and G39–T41 each bind GTP. D12 functions as the Proton acceptor in the catalytic mechanism. D12 and G39 together coordinate Mg(2+). IMP-binding positions include D12–K15, N37–H40, T121, R135, Q215, T230, and R294. Catalysis depends on H40, which acts as the Proton donor. Residue T290–R296 participates in substrate binding. GTP is bound by residues R296, K322–D324, and S400–S402.

Belongs to the adenylosuccinate synthetase family. In terms of assembly, homodimer. Mg(2+) serves as cofactor.

The protein localises to the cytoplasm. The catalysed reaction is IMP + L-aspartate + GTP = N(6)-(1,2-dicarboxyethyl)-AMP + GDP + phosphate + 2 H(+). It functions in the pathway purine metabolism; AMP biosynthesis via de novo pathway; AMP from IMP: step 1/2. Its function is as follows. Plays an important role in the de novo pathway of purine nucleotide biosynthesis. Catalyzes the first committed step in the biosynthesis of AMP from IMP. This chain is Adenylosuccinate synthetase, found in Helicobacter acinonychis (strain Sheeba).